Reading from the N-terminus, the 186-residue chain is Shikimate kinase (186 aa).

21–26 (GVGKTT) contributes to the ATP binding site. Threonine 25 contacts Mg(2+). Positions 43, 67, and 90 each coordinate substrate. Arginine 129 serves as a coordination point for ATP. A substrate-binding site is contributed by arginine 147.

Belongs to the shikimate kinase family. As to quaternary structure, monomer. Mg(2+) serves as cofactor.

Its subcellular location is the cytoplasm. It carries out the reaction shikimate + ATP = 3-phosphoshikimate + ADP + H(+). Its pathway is metabolic intermediate biosynthesis; chorismate biosynthesis; chorismate from D-erythrose 4-phosphate and phosphoenolpyruvate: step 5/7. Its function is as follows. Catalyzes the specific phosphorylation of the 3-hydroxyl group of shikimic acid using ATP as a cosubstrate. The chain is Shikimate kinase from Bacillus subtilis (strain 168).